We begin with the raw amino-acid sequence, 155 residues long: Anaerobic ribonucleoside-triphosphate reductase-activating protein (155 aa).

Positions 26, 30, and 33 each coordinate [4Fe-4S] cluster. S-adenosyl-L-methionine is bound by residues 32–34 (GCY) and Gly-74.

This sequence belongs to the organic radical-activating enzymes family. In terms of assembly, forms a tetramer composed of two NrdD and two NrdG subunits. [4Fe-4S] cluster is required as a cofactor.

The protein localises to the cytoplasm. It catalyses the reaction glycyl-[protein] + reduced [flavodoxin] + S-adenosyl-L-methionine = glycin-2-yl radical-[protein] + semiquinone [flavodoxin] + 5'-deoxyadenosine + L-methionine + H(+). Activation of anaerobic ribonucleoside-triphosphate reductase under anaerobic conditions by generation of an organic free radical, using S-adenosylmethionine and reduced flavodoxin as cosubstrates to produce 5'-deoxy-adenosine. In Haemophilus influenzae (strain ATCC 51907 / DSM 11121 / KW20 / Rd), this protein is Anaerobic ribonucleoside-triphosphate reductase-activating protein (nrdG).